Reading from the N-terminus, the 289-residue chain is Inorganic pyrophosphatase (289 aa).

At Ser2 the chain carries N-acetylserine. Position 57 is an N6-acetyllysine (Lys57). The Mg(2+) site is built by Asp116, Asp121, and Asp153. At Ser250 the chain carries Phosphoserine.

The protein belongs to the PPase family. In terms of assembly, homodimer. Mg(2+) is required as a cofactor. In terms of processing, the N-terminus is blocked. In terms of tissue distribution, highest levels are found in retinal rod outer segments.

It is found in the cytoplasm. It carries out the reaction diphosphate + H2O = 2 phosphate + H(+). In Bos taurus (Bovine), this protein is Inorganic pyrophosphatase (PPA1).